Consider the following 1997-residue polypeptide: Otoferlin (1997 aa).

Residues 1 to 98 (MALIVHLKTV…VEENRVEVTD (98 aa)) form the C2 1 domain. The Cytoplasmic portion of the chain corresponds to 1-1963 (MALIVHLKTV…ARYFLWHTYR (1963 aa)). The interval 140-167 (QEEKDSQETDGLLPGSRPSTRISGEKSF) is disordered. C2 domains are found at residues 235–356 (KRSK…HKWA) and 399–530 (IEGN…FLPT). The tract at residues 643–692 (VDGMSRPLRPRPRKEPGDEEEVDLIQNSSDDEGDEAGDLASVSSTPPMRP) is disordered. Over residues 659 to 679 (GDEEEVDLIQNSSDDEGDEAG) the composition is skewed to acidic residues. Residues 791-820 (RERLKSCMRELESMGQQAKSLRAQVKRHTV) adopt a coiled-coil conformation. 2 C2 domains span residues 943–1068 (LHSF…PPRF) and 1115–1241 (RGPI…PNWN). Positions 975, 981, 1037, 1039, and 1045 each coordinate Ca(2+). 3 disordered regions span residues 1253-1272 (LRNG…SMEP), 1296-1326 (DVAE…ESML), and 1343-1402 (LRQH…EKKK). 2 stretches are compositionally biased toward acidic residues: residues 1314–1325 (EEPEEEEPDESM) and 1352–1361 (DLEEKEEMES). The segment covering 1370–1383 (KSKEKSRAAKEEKK) has biased composition (basic and acidic residues). 2 consecutive C2 domains span residues 1464 to 1593 (LPED…ATCG) and 1714 to 1865 (DMPA…KQCT). Aspartate 1508, aspartate 1514, aspartate 1563, aspartate 1565, aspartate 1571, aspartate 1836, serine 1839, and aspartate 1842 together coordinate Ca(2+). The chain crosses the membrane as a helical span at residues 1964-1984 (WLLLKFLLLFLLLLLFALFLY). The Extracellular portion of the chain corresponds to 1985–1997 (SLPGYLAKKILGA).

Belongs to the ferlin family. As to quaternary structure, interacts with SNAP25; the interaction is direct. Interacts with STX1; the interaction is direct. Interacts with RAB8B. Ca(2+) is required as a cofactor. In terms of tissue distribution, isoform 1 is expressed in cochlea and brain. Expressed in the cochlear and vestibular hair cells. Expressed in both inner and outer hair cells (IHCs and OHCs) and cochlear ganglions neurons at postnatal day 2 (P2) and 6 (P6). Expressed only in IHCs at postnatal day 60 (P60) (at protein level). Strongly expressed in brain and inner ear. In the inner ear, it is mainly expressed in the cochlear IHC and vestibular type I sensory hair cells. Weakly expressed in eye, heart, skeletal muscle, liver, kidney, lung and testis.

The protein localises to the cytoplasmic vesicle. It is found in the secretory vesicle. It localises to the synaptic vesicle membrane. The protein resides in the basolateral cell membrane. Its subcellular location is the endoplasmic reticulum membrane. The protein localises to the golgi apparatus membrane. It is found in the presynaptic cell membrane. It localises to the cell membrane. Functionally, key calcium ion sensor involved in the Ca(2+)-triggered synaptic vesicle-plasma membrane fusion and in the control of neurotransmitter release at these output synapses. Interacts in a calcium-dependent manner to the presynaptic SNARE proteins at ribbon synapses of cochlear inner hair cells (IHCs) to trigger exocytosis of neurotransmitter. Also essential to synaptic exocytosis in immature outer hair cells (OHCs). May also play a role within the recycling of endosomes. The polypeptide is Otoferlin (Otof) (Mus musculus (Mouse)).